The following is a 539-amino-acid chain: Chaperone Ric-8A (539 aa).

Positions 507-539 are disordered; sequence MGITPSGNLAPMENAIRDMADERSSSDSDLGLD. A compositionally biased stretch (basic and acidic residues) spans 521–532; the sequence is AIRDMADERSSS.

It belongs to the synembryn family.

It is found in the cytoplasm. The protein localises to the cell cortex. Its function is as follows. Chaperone that specifically binds and folds nascent G alpha proteins prior to G protein heterotrimer formation, promoting their stability and activity: folds GNAI1, GNAO1, GNA13 and GNAQ. Does not fold G(s) G-alpha proteins GNAS nor GNAL. Also acts as a guanine nucleotide exchange factor (GEF) for G alpha proteins by stimulating exchange of bound GDP for free GTP. The chain is Chaperone Ric-8A (RIC8A) from Gallus gallus (Chicken).